The primary structure comprises 129 residues: Tumor necrosis factor receptor superfamily member 12A (129 aa).

The N-terminal stretch at methionine 1–glycine 27 is a signal peptide. The Extracellular segment spans residues glutamate 28–proline 80. Cystine bridges form between cysteine 36–cysteine 49, cysteine 52–cysteine 67, and cysteine 55–cysteine 64. The stretch at cysteine 36 to cysteine 67 is one TNFR-Cys; atypical repeat. A helical membrane pass occupies residues isoleucine 81 to tryptophan 101. Residues arginine 102–glutamine 129 lie on the Cytoplasmic side of the membrane.

Associates with TRAF1 and TRAF2, and probably also with TRAF3. In terms of tissue distribution, highly expressed in fetal heart, intestine, kidney, liver, lung and skin, and in adult heart and ovary. Intermediate expression in adult kidney, lung and skin.

The protein resides in the membrane. Functionally, receptor for TNFSF12/TWEAK. Weak inducer of apoptosis in some cell types. Promotes angiogenesis and the proliferation of endothelial cells. May modulate cellular adhesion to matrix proteins. The polypeptide is Tumor necrosis factor receptor superfamily member 12A (Tnfrsf12a) (Mus musculus (Mouse)).